We begin with the raw amino-acid sequence, 543 residues long: 2-succinyl-5-enolpyruvyl-6-hydroxy-3-cyclohexene-1-carboxylate synthase (543 aa).

This sequence belongs to the TPP enzyme family. MenD subfamily. Homodimer. The cofactor is Mg(2+). It depends on Mn(2+) as a cofactor. Requires thiamine diphosphate as cofactor.

The enzyme catalyses isochorismate + 2-oxoglutarate + H(+) = 5-enolpyruvoyl-6-hydroxy-2-succinyl-cyclohex-3-ene-1-carboxylate + CO2. The protein operates within quinol/quinone metabolism; 1,4-dihydroxy-2-naphthoate biosynthesis; 1,4-dihydroxy-2-naphthoate from chorismate: step 2/7. It functions in the pathway quinol/quinone metabolism; menaquinone biosynthesis. In terms of biological role, catalyzes the thiamine diphosphate-dependent decarboxylation of 2-oxoglutarate and the subsequent addition of the resulting succinic semialdehyde-thiamine pyrophosphate anion to isochorismate to yield 2-succinyl-5-enolpyruvyl-6-hydroxy-3-cyclohexene-1-carboxylate (SEPHCHC). This is 2-succinyl-5-enolpyruvyl-6-hydroxy-3-cyclohexene-1-carboxylate synthase from Corynebacterium glutamicum (strain R).